We begin with the raw amino-acid sequence, 220 residues long: RING-H2 finger protein ATL77 (220 aa).

A helical membrane pass occupies residues 53–73; sequence LMLLSILLCGIICSLGLHYII. An RING-type; atypical zinc finger spans residues 130-172; sequence CVICLSDFVAGEQLRVLPKCNHGFHLRCIDKWLTQHMTCPKCR.

Belongs to the RING-type zinc finger family. ATL subfamily.

Its subcellular location is the membrane. It carries out the reaction S-ubiquitinyl-[E2 ubiquitin-conjugating enzyme]-L-cysteine + [acceptor protein]-L-lysine = [E2 ubiquitin-conjugating enzyme]-L-cysteine + N(6)-ubiquitinyl-[acceptor protein]-L-lysine.. It participates in protein modification; protein ubiquitination. This Arabidopsis thaliana (Mouse-ear cress) protein is RING-H2 finger protein ATL77 (ATL77).